The sequence spans 95 residues: Integration host factor subunit beta (95 aa).

The tract at residues 56-76 is disordered; the sequence is RAPRTGRNPKTGTSVDLDGKY.

This sequence belongs to the bacterial histone-like protein family. Heterodimer of an alpha and a beta chain.

Its function is as follows. This protein is one of the two subunits of integration host factor, a specific DNA-binding protein that functions in genetic recombination as well as in transcriptional and translational control. The chain is Integration host factor subunit beta from Shewanella sediminis (strain HAW-EB3).